Here is a 203-residue protein sequence, read N- to C-terminus: Putative phosphoserine phosphatase 2 (203 aa).

The active-site Tele-phosphohistidine intermediate is His9. His149 is a catalytic residue.

This sequence belongs to the histidine phosphatase superfamily. Metal-independent phosphoserine phosphatase family. In terms of assembly, heterodimer with PspA. The PspB subunit appears to have no or considerably lower PSP activity compared with that of PspA.

It carries out the reaction O-phospho-L-serine + H2O = L-serine + phosphate. The enzyme catalyses O-phospho-D-serine + H2O = D-serine + phosphate. It participates in amino-acid biosynthesis; L-serine biosynthesis; L-serine from 3-phospho-D-glycerate: step 3/3. Its activity is regulated as follows. Activity is not inhibited by EDTA in vitro, nor enhanced by the addition of Mg(2+). In terms of biological role, part of a complex that catalyzes the dephosphorylation of L-phosphoserine to serine and inorganic phosphate. Is poorly or not active toward D-phosphoserine, DL-phosphothreonine, 3-phosphoglycerate, para-nitrophenylphosphate, and fructose-6-phosphate. Does not display phosphoglycerate mutase activity. The sequence is that of Putative phosphoserine phosphatase 2 (pspB) from Hydrogenobacter thermophilus (strain DSM 6534 / IAM 12695 / TK-6).